Reading from the N-terminus, the 252-residue chain is ATP synthase subunit a (252 aa).

Helical transmembrane passes span 29-49, 87-107, 117-137, 146-166, 196-216, and 219-239; these read FTNVSFFIVATVVVSSVFLFI, FFPLVFSLFTFILVANFIGLF, IMITFSLAMLVIFTVISYGFY, LFVPSGVPVLILPLVTMIEVI, FIVSMIGIGIMGVGGSILPLI, and VAITALEFLVAFLQAYVFTVL.

Belongs to the ATPase A chain family. As to quaternary structure, F-type ATPases have 2 components, CF(1) - the catalytic core - and CF(0) - the membrane proton channel. CF(1) has five subunits: alpha(3), beta(3), gamma(1), delta(1), epsilon(1). CF(0) has three main subunits: a(1), b(2) and c(9-12). The alpha and beta chains form an alternating ring which encloses part of the gamma chain. CF(1) is attached to CF(0) by a central stalk formed by the gamma and epsilon chains, while a peripheral stalk is formed by the delta and b chains.

The protein localises to the cell inner membrane. Key component of the proton channel; it plays a direct role in the translocation of protons across the membrane. In Bartonella henselae (strain ATCC 49882 / DSM 28221 / CCUG 30454 / Houston 1) (Rochalimaea henselae), this protein is ATP synthase subunit a.